We begin with the raw amino-acid sequence, 339 residues long: Serpentine receptor class alpha-24 (339 aa).

The next 7 membrane-spanning stretches (helical) occupy residues 26 to 46 (ITVK…YYFA), 65 to 82 (LILL…TTML), 112 to 132 (ELFV…SLAF), 151 to 171 (VSIF…YVGL), 199 to 219 (FRTL…YLSV), 248 to 268 (VCIL…GVNY), and 284 to 304 (LAPF…VIHC).

This sequence belongs to the nematode receptor-like protein sra family.

Its subcellular location is the membrane. This Caenorhabditis elegans protein is Serpentine receptor class alpha-24 (sra-24).